We begin with the raw amino-acid sequence, 213 residues long: ATP phosphoribosyltransferase (213 aa).

The protein belongs to the ATP phosphoribosyltransferase family. Short subfamily. In terms of assembly, heteromultimer composed of HisG and HisZ subunits.

It localises to the cytoplasm. It catalyses the reaction 1-(5-phospho-beta-D-ribosyl)-ATP + diphosphate = 5-phospho-alpha-D-ribose 1-diphosphate + ATP. It participates in amino-acid biosynthesis; L-histidine biosynthesis; L-histidine from 5-phospho-alpha-D-ribose 1-diphosphate: step 1/9. In terms of biological role, catalyzes the condensation of ATP and 5-phosphoribose 1-diphosphate to form N'-(5'-phosphoribosyl)-ATP (PR-ATP). Has a crucial role in the pathway because the rate of histidine biosynthesis seems to be controlled primarily by regulation of HisG enzymatic activity. The chain is ATP phosphoribosyltransferase from Synechococcus sp. (strain RCC307).